The chain runs to 29 residues: Dermaseptin-9TR (29 aa).

In terms of tissue distribution, expressed by the skin glands.

The protein localises to the secreted. In terms of biological role, has antimicrobial activity. The sequence is that of Dermaseptin-9TR from Phyllomedusa trinitatis (Trinidad leaf frog).